Reading from the N-terminus, the 72-residue chain is Crustacean hyperglycemic hormone (72 aa).

Glutamine 1 bears the Pyrrolidone carboxylic acid mark. D-phenylalanine; in form CHH-II is present on phenylalanine 3. 3 cysteine pairs are disulfide-bonded: cysteine 7-cysteine 43, cysteine 23-cysteine 39, and cysteine 26-cysteine 52. A Valine amide modification is found at valine 72.

Stereoinversion of L-Phe (in CHH-I) to D-Phe (in CHH-II) the two forms are present in a ratio 3:1 (CHH-I/CHH-II). Produced by the medulla terminalis X-organ in the eyestalks and transported to the sinus gland where they are stored and released.

The protein resides in the secreted. Its function is as follows. Hormone found in the sinus gland of isopods and decapods which controls the blood sugar level. Has a secretagogue action over the amylase released from the midgut gland. May act as a stress hormone and may be involved in the control of molting and reproduction. The polypeptide is Crustacean hyperglycemic hormone (Procambarus bouvieri (Mexican crayfish)).